The sequence spans 236 residues: Eukaryotic translation initiation factor 3 subunit K (236 aa).

Positions 42–222 (YDKDILVTTL…TIKSRNIEEK (181 aa)) constitute a PCI domain.

It belongs to the eIF-3 subunit K family. As to quaternary structure, component of the eukaryotic translation initiation factor 3 (eIF-3) complex.

The protein resides in the cytoplasm. In terms of biological role, component of the eukaryotic translation initiation factor 3 (eIF-3) complex, which is involved in protein synthesis of a specialized repertoire of mRNAs and, together with other initiation factors, stimulates binding of mRNA and methionyl-tRNAi to the 40S ribosome. The eIF-3 complex specifically targets and initiates translation of a subset of mRNAs involved in cell proliferation. This Brugia malayi (Filarial nematode worm) protein is Eukaryotic translation initiation factor 3 subunit K.